Here is a 264-residue protein sequence, read N- to C-terminus: Tritrans,polycis-undecaprenyl-diphosphate synthase (geranylgeranyl-diphosphate specific) (264 aa).

Asp-43 is a catalytic residue. Residue Asp-43 coordinates Mg(2+). Residues 44 to 47, Trp-48, His-60, and 88 to 90 each bind substrate; these read GNRR and STE. Asn-91 (proton acceptor) is an active-site residue. Substrate is bound by residues Phe-92, Arg-94, Arg-213, and 219–221; that span reads RIS. A Mg(2+)-binding site is contributed by Glu-232.

It belongs to the UPP synthase family. Homodimer. Requires Mg(2+) as cofactor.

It carries out the reaction geranylgeranyl diphosphate + 7 isopentenyl diphosphate = tri-trans,hepta-cis-undecaprenyl diphosphate + 7 diphosphate. Catalyzes the sequential condensation of isopentenyl diphosphate (IPP) with geranylgeranyl diphosphate (GGPP) to yield (2Z,6Z,10Z,14Z,18Z,22Z,26Z,30E,34E,38E)-undecaprenyl diphosphate (tritrans,heptacis-UPP). It is probably the precursor of glycosyl carrier lipids. The protein is Tritrans,polycis-undecaprenyl-diphosphate synthase (geranylgeranyl-diphosphate specific) of Pyrococcus abyssi (strain GE5 / Orsay).